Reading from the N-terminus, the 2372-residue chain is Nonribosomal peptide synthase roqA (2372 aa).

An adenylation 1 region spans residues 217 to 610 (EHCRSQPDAE…VGRKDREVKI (394 aa)). A disordered region spans residues 723-745 (AASSHSSTREQPSNQRDKEDVEL). Polar residues predominate over residues 725–736 (SSHSSTREQPSN). Residues 750–823 (SAKENTLCSV…KIARCTAESK (74 aa)) form the Carrier 1 domain. S784 is modified (O-(pantetheine 4'-phosphoryl)serine). The condensation 1 stretch occupies residues 856–1122 (EDIYPCTPLQ…FATFPFRTQL (267 aa)). The tract at residues 1290-1679 (QPNSEAVCAW…VGRKDTQVKL (390 aa)) is adenylation 2. The 77-residue stretch at 1819–1895 (KPTTEQERFV…LFCKHVILIQ (77 aa)) folds into the Carrier 2 domain. S1856 is modified (O-(pantetheine 4'-phosphoryl)serine). The segment at 1962–2227 (TSNYTSTAIF…FNVLPCRIAI (266 aa)) is condensation 2.

It participates in alkaloid biosynthesis. Its function is as follows. Dipeptide synthase; part of the gene cluster that mediates the biosynthesis of the mycotoxins roquefortine C and meleagrin. The first stage is catalyzed by the dipeptide synthase roqA which condenses histidine and tryptophan to produce histidyltryptophanyldiketopiperazine (HTD). HTD is then converted to roquefortine C through two possible pathways. In the first pathway, prenyltransferase roqD transforms HTD to the intermediate roquefortine D, which is in turn converted to roquefortine C by the cytochrome P450 monooxygenase roqR. In the second pathway, HTD is first converted to the intermediate dehydrohistidyltryptophanyldi-ketopiperazine (DHTD) by roqR which is then prenylated by roqD to form roquefortine C. Roquefortine C can be further transformed to meleagrin via three more reactions including oxydation to glandicolin A by roqM, which is further reduced to glandicoline B by roqO. Finally, glandicoline B is converted to meleagrin by the glandicoline B O-methyltransferase roqN. More studies identified further branching and additional metabolites produced by the roquefortine/meleagrin cluster, including roquefortine F, roquefortine L, roquefortine M, roquefortine N and neoxaline. The protein is Nonribosomal peptide synthase roqA of Penicillium rubens (strain ATCC 28089 / DSM 1075 / NRRL 1951 / Wisconsin 54-1255) (Penicillium chrysogenum).